Consider the following 336-residue polypeptide: F420-dependent glucose-6-phosphate dehydrogenase (336 aa).

Asp-39 contacts coenzyme F420-(gamma-Glu)n. Residue His-40 is the Proton donor of the active site. Coenzyme F420-(gamma-Glu)n contacts are provided by residues Thr-76 and Thr-107–Gly-108. The active-site Proton acceptor is the Glu-109. Residues Asn-112, Gly-177–Gly-178, and Leu-180–Val-181 contribute to the coenzyme F420-(gamma-Glu)n site. Positions 195, 198, 259, and 283 each coordinate substrate.

It belongs to the F420-dependent glucose-6-phosphate dehydrogenase family. As to quaternary structure, homodimer.

The catalysed reaction is oxidized coenzyme F420-(gamma-L-Glu)(n) + D-glucose 6-phosphate + H(+) = 6-phospho-D-glucono-1,5-lactone + reduced coenzyme F420-(gamma-L-Glu)(n). Its function is as follows. Catalyzes the coenzyme F420-dependent oxidation of glucose 6-phosphate (G6P) to 6-phosphogluconolactone. The sequence is that of F420-dependent glucose-6-phosphate dehydrogenase from Nocardia farcinica (strain IFM 10152).